Here is a 212-residue protein sequence, read N- to C-terminus: Interleukin-6 (212 aa).

The N-terminal stretch at 1–27 is a signal peptide; that stretch reads MNSVSTSAFGPVAFSLGLLLVLPAAFP. The cysteines at positions 72 and 78 are disulfide-linked. Residue Asn73 is glycosylated (N-linked (GlcNAc...) asparagine). Ser81 bears the Phosphoserine mark. Residues Cys101 and Cys111 are joined by a disulfide bond. An N-linked (GlcNAc...) asparagine glycan is attached at Asn172.

Belongs to the IL-6 superfamily. In terms of assembly, component of a hexamer of two molecules each of IL6, IL6R and IL6ST; first binds to IL6R to associate with the signaling subunit IL6ST. Interacts with IL6R (via the N-terminal ectodomain); this interaction may be affected by IL6R-binding with SORL1, hence decreasing IL6 cis signaling. Interacts with SORL1 (via the N-terminal ectodomain); this interaction leads to IL6 internalization and lysosomal degradation. May form a trimeric complex with the soluble SORL1 ectodomain and soluble IL6R receptor; this interaction might stabilize circulating IL6, hence promoting IL6 trans signaling.

It localises to the secreted. In terms of biological role, cytokine with a wide variety of biological functions in immunity, tissue regeneration, and metabolism. Binds to IL6R, then the complex associates to the signaling subunit IL6ST/gp130 to trigger the intracellular IL6-signaling pathway. The interaction with the membrane-bound IL6R and IL6ST stimulates 'classic signaling', whereas the binding of IL6 and soluble IL6R to IL6ST stimulates 'trans-signaling'. Alternatively, 'cluster signaling' occurs when membrane-bound IL6:IL6R complexes on transmitter cells activate IL6ST receptors on neighboring receiver cells. Its function is as follows. IL6 is a potent inducer of the acute phase response. Rapid production of IL6 contributes to host defense during infection and tissue injury, but excessive IL6 synthesis is involved in disease pathology. In the innate immune response, is synthesized by myeloid cells, such as macrophages and dendritic cells, upon recognition of pathogens through toll-like receptors (TLRs) at the site of infection or tissue injury. In the adaptive immune response, is required for the differentiation of B cells into immunoglobulin-secreting cells. Plays a major role in the differentiation of CD4(+) T cell subsets. Essential factor for the development of T follicular helper (Tfh) cells that are required for the induction of germinal-center formation. Required to drive naive CD4(+) T cells to the Th17 lineage. Also required for proliferation of myeloma cells and the survival of plasmablast cells. Functionally, acts as an essential factor in bone homeostasis and on vessels directly or indirectly by induction of VEGF, resulting in increased angiogenesis activity and vascular permeability. Induces, through 'trans-signaling' and synergistically with IL1B and TNF, the production of VEGF. Involved in metabolic controls, is discharged into the bloodstream after muscle contraction increasing lipolysis and improving insulin resistance. 'Trans-signaling' in central nervous system also regulates energy and glucose homeostasis. Mediates, through GLP-1, crosstalk between insulin-sensitive tissues, intestinal L cells and pancreatic islets to adapt to changes in insulin demand. Also acts as a myokine. Plays a protective role during liver injury, being required for maintenance of tissue regeneration. Also has a pivotal role in iron metabolism by regulating HAMP/hepcidin expression upon inflammation or bacterial infection. Through activation of IL6ST-YAP-NOTCH pathway, induces inflammation-induced epithelial regeneration. This is Interleukin-6 (IL6) from Macaca thibetana (Pere David's macaque).